The following is a 215-amino-acid chain: Uracil phosphoribosyltransferase (215 aa).

5-phospho-alpha-D-ribose 1-diphosphate contacts are provided by residues R84, R109, and 136–144 (DPMLATGNT). Residues I198 and 203 to 205 (GDA) contribute to the uracil site. D204 contacts 5-phospho-alpha-D-ribose 1-diphosphate.

The protein belongs to the UPRTase family. Requires Mg(2+) as cofactor.

It carries out the reaction UMP + diphosphate = 5-phospho-alpha-D-ribose 1-diphosphate + uracil. Its pathway is pyrimidine metabolism; UMP biosynthesis via salvage pathway; UMP from uracil: step 1/1. With respect to regulation, allosterically activated by GTP. Catalyzes the conversion of uracil and 5-phospho-alpha-D-ribose 1-diphosphate (PRPP) to UMP and diphosphate. This Methanothermobacter thermautotrophicus (strain ATCC 29096 / DSM 1053 / JCM 10044 / NBRC 100330 / Delta H) (Methanobacterium thermoautotrophicum) protein is Uracil phosphoribosyltransferase.